Here is a 261-residue protein sequence, read N- to C-terminus: Immediate-early protein IE-0 (261 aa).

An RING-type zinc finger spans residues 212 to 257; the sequence is CNVCKEISTDERFLKPKECCEYAICNACCVNMWKTATTHAKCPACR.

Interacts with proteins C42 and FP25. Interacts with host beta-tubulin. Interacts with Ac66 and vUb.

It localises to the host nucleus. The protein resides in the host cytoplasm. The protein localises to the virion. Functionally, putative viral E3 ligase that plays an essential regulatory role in both viral DNA replication and transcriptional transactivation. The role in transcription has been shown to include activation of gene expression from early viral promoters. Also promotes the efficient egress of nucleocapsids from the host nucleus. May act as an E3 ligase that promotes ubiquitination of nucleocapsids proteins by vUbi and subsequent viral egress for the host nucleus. The sequence is that of Immediate-early protein IE-0 (IE0) from Lepidoptera (butterflies and moths).